Consider the following 952-residue polypeptide: Substrate-adhesion molecule (952 aa).

An N-terminal signal peptide occupies residues 1 to 25 (MKSQKIGSMILLIGILLAIFNFAYS). At 26-527 (DDDIERFSIN…TWFFDTNVET (502 aa)) the chain is on the extracellular side. N-linked (GlcNAc...) asparagine glycans are attached at residues Asn-78, Asn-182, Asn-231, Asn-243, and Asn-412. The 34-residue stretch at 438 to 471 (EIRRCKDSCNGYGTCNTANYTCVCDSAHMGETCN) folds into the EGF-like domain. 3 disulfides stabilise this stretch: Cys-442–Cys-452, Cys-446–Cys-459, and Cys-461–Cys-470. Residue Asn-456 is glycosylated (N-linked (GlcNAc...) asparagine). Residues 528–548 (GVIALACIFIAFVGILYIIDI) traverse the membrane as a helical segment. The Cytoplasmic segment spans residues 549-591 (GTTVPIDIKRAKDYAEENKSGQFPKATHEEASVLWWRDQRSHK). The chain crosses the membrane as a helical span at residues 592-612 (AWTFMDQFQLISLVSHIGVVF). The Extracellular portion of the chain corresponds to 613–678 (PSRFISFTEY…GDLYLLPNIL (66 aa)). Residues 679–699 (FWFGLLLGVFLVPLLLAYAII) form a helical membrane-spanning segment. The Cytoplasmic segment spans residues 700-722 (SFMESLIHWKEVVTNRLIHVLVR). Residues 723–743 (ILTFGYIGVLIAASFAMVTPL) form a helical membrane-spanning segment. The Extracellular segment spans residues 744 to 752 (HDYRIIIPG). The helical transmembrane segment at 753–773 (AIIFVLYGIGLPIAIWFLLAV) threads the bilayer. Topologically, residues 774–801 (PEARLHNPTFKQRFGCLYVHYKPKTDHR) are cytoplasmic. Residues 802–822 (FVVFMFIKRFIMAVIIGILSF) traverse the membrane as a helical segment. Topologically, residues 823–837 (KPMTNYPLTGTDLAV) are extracellular. The helical transmembrane segment at 838–858 (PIVQVVVIDIALIGYAVLLFI) threads the bilayer. The Cytoplasmic portion of the chain corresponds to 859–868 (RKPYFDHYQL). The chain crosses the membrane as a helical span at residues 869-889 (WLEYLLTAINIVTVSLSLTHI). The Extracellular segment spans residues 890–897 (KSPSAAGE). A helical membrane pass occupies residues 898–918 (LIACLIQALALVACIAAYVVA). The Cytoplasmic segment spans residues 919 to 952 (WLQMRSSFIKKVKKYLCCCCKSSKSSGEIDLSKK).

The protein resides in the cell membrane. Its function is as follows. Involved in substrate adhesion, myosin-independent cytokinesis, organization of actin cytoskeleton, and phagocytosis. The polypeptide is Substrate-adhesion molecule (sadA) (Dictyostelium discoideum (Social amoeba)).